The following is a 327-amino-acid chain: Cobalamin biosynthesis protein CobD (327 aa).

The next 4 membrane-spanning stretches (helical) occupy residues 63–83 (VGIL…ARLF), 84–104 (DVLG…FLAQ), 158–178 (FSDG…PGLL), and 305–325 (VFYA…LPLL).

This sequence belongs to the CobD/CbiB family.

It localises to the cell membrane. It functions in the pathway cofactor biosynthesis; adenosylcobalamin biosynthesis. Its function is as follows. Converts cobyric acid to cobinamide by the addition of aminopropanol on the F carboxylic group. The polypeptide is Cobalamin biosynthesis protein CobD (Rhizobium meliloti (strain 1021) (Ensifer meliloti)).